Consider the following 637-residue polypeptide: Sodium-dependent phosphate transport protein 2A (637 aa).

Residues 1–103 are Cytoplasmic-facing; that stretch reads MMSYSERLGG…LAQVGTKLLK (103 aa). A phosphoserine mark is found at S14 and S34. The helical transmembrane segment at 104-125 threads the bilayer; it reads VPLMLAFLYLFVCSLDVLSSAF. The Extracellular segment spans residues 126 to 145; the sequence is QLAGGKVAGDIFKDNAILSN. Residues 146–163 traverse the membrane as a helical segment; that stretch reads PVAGLVVGILVTVLVQSS. At 164–165 the chain is on the cytoplasmic side; that stretch reads ST. The helical transmembrane segment at 166–185 threads the bilayer; it reads STSIIVSMVSSGLLEVSSAI. The Extracellular portion of the chain corresponds to 186-345; sequence PIIMGSNIGT…HIFVDTGLPD (160 aa). Intrachain disulfides connect C225-C520 and C306-C334. N298 and N328 each carry an N-linked (GlcNAc...) asparagine glycan. The helical transmembrane segment at 346–368 threads the bilayer; it reads LAVGLILLAGSLVVLCTCLILLV. Residues 369 to 410 lie on the Cytoplasmic side of the membrane; it reads KMLNSLLKGQVMSSRRSSTQTDFPAPFTWVTGYFAMVVGASM. A helical transmembrane segment spans residues 411–434; that stretch reads TFVVQSSSVFTSAITPLIGLGVIS. The Extracellular segment spans residues 435 to 464; the sequence is IERAYPLTLGSNIGTTTTAILAALASPREK. Residues 465–485 traverse the membrane as a helical segment; the sequence is LSSSFQIALCHFFFNISGILL. Over 486 to 511 the chain is Cytoplasmic; that stretch reads WYPLPCTRLPIRMAKALGKRTAKYRW. T506 carries the phosphothreonine; by PKC modification. Residues 512–532 traverse the membrane as a helical segment; it reads FAVLYLLVCFLLLPSLVFGIS. The Extracellular portion of the chain corresponds to 533–537; the sequence is MAGWQ. The helical transmembrane segment at 538–559 threads the bilayer; the sequence is AMVGVGTPFGALLAFVVLVNVL. The Cytoplasmic portion of the chain corresponds to 560–637; sequence QSRSPGHLPK…LPAHHNATRL (78 aa). S605 bears the Phosphoserine mark. A Phosphothreonine modification is found at T621. S623 carries the post-translational modification Phosphoserine.

Belongs to the SLC34A transporter family. Interacts via its C-terminal region with NHERF4. Interacts with NHERF1. Interacts with TMEM174; regulates SLC34A1 internalization by PTH and FGF23. Kidney.

It is found in the apical cell membrane. The protein resides in the cell membrane. It carries out the reaction 3 Na(+)(out) + phosphate(out) = 3 Na(+)(in) + phosphate(in). In terms of biological role, involved in actively transporting phosphate into cells via Na(+) cotransport in the renal brush border membrane. The cotransport has a Na(+):Pi stoichiometry of 3:1 and is electrogenic. The polypeptide is Sodium-dependent phosphate transport protein 2A (Mus musculus (Mouse)).